A 372-amino-acid chain; its full sequence is 4-hydroxy-3-methylbut-2-en-1-yl diphosphate synthase (flavodoxin) (372 aa).

The [4Fe-4S] cluster site is built by cysteine 270, cysteine 273, cysteine 305, and glutamate 312.

This sequence belongs to the IspG family. Requires [4Fe-4S] cluster as cofactor.

The catalysed reaction is (2E)-4-hydroxy-3-methylbut-2-enyl diphosphate + oxidized [flavodoxin] + H2O + 2 H(+) = 2-C-methyl-D-erythritol 2,4-cyclic diphosphate + reduced [flavodoxin]. It participates in isoprenoid biosynthesis; isopentenyl diphosphate biosynthesis via DXP pathway; isopentenyl diphosphate from 1-deoxy-D-xylulose 5-phosphate: step 5/6. In terms of biological role, converts 2C-methyl-D-erythritol 2,4-cyclodiphosphate (ME-2,4cPP) into 1-hydroxy-2-methyl-2-(E)-butenyl 4-diphosphate. The sequence is that of 4-hydroxy-3-methylbut-2-en-1-yl diphosphate synthase (flavodoxin) from Escherichia coli O139:H28 (strain E24377A / ETEC).